Reading from the N-terminus, the 359-residue chain is Membrane-bound lytic murein transglycosylase C (359 aa).

Residues 1 to 16 (MKKYLALALIAPLLIS) form the signal peptide. The N-palmitoyl cysteine moiety is linked to residue C17. C17 is lipidated: S-diacylglycerol cysteine.

Belongs to the transglycosylase Slt family.

The protein resides in the cell outer membrane. The enzyme catalyses Exolytic cleavage of the (1-&gt;4)-beta-glycosidic linkage between N-acetylmuramic acid (MurNAc) and N-acetylglucosamine (GlcNAc) residues in peptidoglycan, from either the reducing or the non-reducing ends of the peptidoglycan chains, with concomitant formation of a 1,6-anhydrobond in the MurNAc residue.. Its function is as follows. Murein-degrading enzyme. May play a role in recycling of muropeptides during cell elongation and/or cell division. This chain is Membrane-bound lytic murein transglycosylase C, found in Escherichia coli O157:H7.